Consider the following 75-residue polypeptide: MQFLERHFSVLFPVLFFFSFYPISFAPNFDWSTYVSLHYPLTLPNHLALMSSYTHQSHCGTSVFHQAQTLVHLHT.

A signal peptide spans 1–26 (MQFLERHFSVLFPVLFFFSFYPISFA).

The protein resides in the secreted. This is an uncharacterized protein from Schizosaccharomyces pombe (strain 972 / ATCC 24843) (Fission yeast).